Reading from the N-terminus, the 260-residue chain is Hydroxyethylthiazole kinase (260 aa).

Residue Met-38 coordinates substrate. ATP is bound by residues Lys-114 and Ser-161. Gly-188 is a substrate binding site.

Belongs to the Thz kinase family. It depends on Mg(2+) as a cofactor.

It catalyses the reaction 5-(2-hydroxyethyl)-4-methylthiazole + ATP = 4-methyl-5-(2-phosphooxyethyl)-thiazole + ADP + H(+). It participates in cofactor biosynthesis; thiamine diphosphate biosynthesis; 4-methyl-5-(2-phosphoethyl)-thiazole from 5-(2-hydroxyethyl)-4-methylthiazole: step 1/1. Functionally, catalyzes the phosphorylation of the hydroxyl group of 4-methyl-5-beta-hydroxyethylthiazole (THZ). This is Hydroxyethylthiazole kinase from Campylobacter lari (strain RM2100 / D67 / ATCC BAA-1060).